We begin with the raw amino-acid sequence, 115 residues long: Replication initiation control protein YabA (115 aa).

The Zn(2+) site is built by His90, Cys92, Cys106, and Cys109.

It belongs to the YabA family. In terms of assembly, homotetramer. Interacts with both DnaA and DnaN, acting as a bridge between these two proteins. Zn(2+) serves as cofactor.

It localises to the cytoplasm. It is found in the nucleoid. Its function is as follows. Involved in control of chromosome replication initiation. Inhibits the cooperative binding of DnaA to the oriC region, thus negatively regulating initiation of chromosome replication. Inhibits the ability of DnaA-ATP to form a helix on DNA; does not disassemble preformed DnaA-DNA helices. Decreases the residence time of DnaA on the chromosome at its binding sites (oriC, replication forks and promoter-binding sites). Tethers DnaA to the replication machinery via the DNA polymerase beta sliding clamp subunit (dnaN). Associates with oriC and other DnaA targets on the chromosome in a DnaA-dependent manner. In Staphylococcus aureus (strain JH1), this protein is Replication initiation control protein YabA.